The following is a 314-amino-acid chain: 2,3-dihydroxyphenylpropionate/2,3-dihydroxicinnamic acid 1,2-dioxygenase (314 aa).

H115 functions as the Proton donor in the catalytic mechanism. H179 acts as the Proton acceptor in catalysis.

Belongs to the LigB/MhpB extradiol dioxygenase family. As to quaternary structure, homotetramer. Fe(2+) is required as a cofactor.

It carries out the reaction 3-(2,3-dihydroxyphenyl)propanoate + O2 = (2Z,4E)-2-hydroxy-6-oxonona-2,4-dienedioate + H(+). The catalysed reaction is (2E)-3-(2,3-dihydroxyphenyl)prop-2-enoate + O2 = (2Z,4E,7E)-2-hydroxy-6-oxonona-2,4,7-trienedioate + H(+). It participates in aromatic compound metabolism; 3-phenylpropanoate degradation. Catalyzes the non-heme iron(II)-dependent oxidative cleavage of 2,3-dihydroxyphenylpropionic acid and 2,3-dihydroxicinnamic acid into 2-hydroxy-6-ketononadienedioate and 2-hydroxy-6-ketononatrienedioate, respectively. In Rhodococcus globerulus, this protein is 2,3-dihydroxyphenylpropionate/2,3-dihydroxicinnamic acid 1,2-dioxygenase.